Reading from the N-terminus, the 194-residue chain is Ribonuclease HII (194 aa).

Residues 3-193 form the RNase H type-2 domain; that stretch reads ILTAGVDEAG…VRNLFAQQAL (191 aa). A divalent metal cation is bound by residues Asp-9, Glu-10, and Asp-101.

It belongs to the RNase HII family. Mn(2+) serves as cofactor. Requires Mg(2+) as cofactor.

It is found in the cytoplasm. It catalyses the reaction Endonucleolytic cleavage to 5'-phosphomonoester.. Its function is as follows. Endonuclease that specifically degrades the RNA of RNA-DNA hybrids. This is Ribonuclease HII from Neisseria meningitidis serogroup C / serotype 2a (strain ATCC 700532 / DSM 15464 / FAM18).